The chain runs to 254 residues: Cytokine-inducible SH2-containing protein (254 aa).

The SH2 domain maps to 82-188; it reads WYWGSITASE…ATTPALPTPK (107 aa). The tract at residues 171–195 is disordered; sequence TRSDSPDLATTPALPTPKEDAPGDP. The region spanning 205–253 is the SOCS box domain; that stretch reads KLVQPFVRRSSTRSLQHLCRLVINRLVVDVDCLPLPRRMADYLRQYPFQ.

Stably associated with the tyrosine-phosphorylated IL3 receptor beta chain and tyrosine-phosphorylated EPO receptor (EPOR).

The protein operates within protein modification; protein ubiquitination. In terms of biological role, SOCS family proteins form part of a classical negative feedback system that regulates cytokine signal transduction. CIS is involved in the negative regulation of cytokines that signal through the JAK-STAT5 pathway such as erythropoietin, prolactin and interleukin 3 (IL3) receptor. Inhibits STAT5 trans-activation by suppressing its tyrosine phosphorylation. May be a substrate recognition component of a SCF-like ECS (Elongin BC-CUL2/5-SOCS-box protein) E3 ubiquitin-protein ligase complex which mediates the ubiquitination and subsequent proteasomal degradation of target proteins. The sequence is that of Cytokine-inducible SH2-containing protein (CISH) from Bos taurus (Bovine).